The following is a 1412-amino-acid chain: DNA-directed RNA polymerase subunit beta' (1412 aa).

Cys71, Cys73, Cys86, and Cys89 together coordinate Zn(2+). Mg(2+) contacts are provided by Asp461, Asp463, and Asp465. Cys815, Cys889, Cys896, and Cys899 together coordinate Zn(2+).

This sequence belongs to the RNA polymerase beta' chain family. As to quaternary structure, the RNAP catalytic core consists of 2 alpha, 1 beta, 1 beta' and 1 omega subunit. When a sigma factor is associated with the core the holoenzyme is formed, which can initiate transcription. Mg(2+) serves as cofactor. It depends on Zn(2+) as a cofactor.

It carries out the reaction RNA(n) + a ribonucleoside 5'-triphosphate = RNA(n+1) + diphosphate. DNA-dependent RNA polymerase catalyzes the transcription of DNA into RNA using the four ribonucleoside triphosphates as substrates. The chain is DNA-directed RNA polymerase subunit beta' from Actinobacillus pleuropneumoniae serotype 5b (strain L20).